The following is a 754-amino-acid chain: Lysyl oxidase homolog 3 (754 aa).

A signal peptide spans 1–26 (MRAVSVWYCCPWGLLLLHCLCSFSVG). SRCR domains lie at 45–146 (FRLA…VICK), 170–283 (VRLR…VSCV), 308–408 (VRLK…VRCN), and 418–526 (IRLS…VICS). 17 disulfide bridges follow: Cys71/Cys135, Cys84/Cys145, Cys115/Cys125, Cys202/Cys272, Cys215/Cys282, Cys249/Cys259, Cys333/Cys397, Cys346/Cys407, Cys377/Cys387, Cys447/Cys512, Cys460/Cys525, Cys493/Cys503, Cys555/Cys561, Cys607/Cys655, Cys639/Cys645, Cys667/Cys677, and Cys714/Cys728. An N-linked (GlcNAc...) asparagine glycan is attached at Asn112. An N-linked (GlcNAc...) asparagine glycan is attached at Asn267. Residues Asn391 and Asn482 are each glycosylated (N-linked (GlcNAc...) asparagine). The tract at residues 530–733 (SDLLLHSALV…WVHNCHIGDA (204 aa)) is lysyl-oxidase like. The Cu cation site is built by His608, His610, and His612. N-linked (GlcNAc...) asparagine glycosylation occurs at Asn626. Positions 635–671 (KASFCLEDTECQEDVSKRYECANFGEQGITVGCWDLY) form a cross-link, lysine tyrosylquinone (Lys-Tyr). Position 671 is a 2',4',5'-topaquinone (Tyr671).

Belongs to the lysyl oxidase family. It depends on Cu cation as a cofactor. Lysine tyrosylquinone residue serves as cofactor. Post-translationally, the lysine tyrosylquinone cross-link (LTQ) is generated by condensation of the epsilon-amino group of a lysine with a topaquinone produced by oxidation of tyrosine. Expressed in palate: predominantly present in the palate mesenchyme and tongue (at protein level). In spine, expressed in the original intervertebral disk, cartilage primordia, anterior and posterior longitudinal ligaments, meninges of spinal cord, lung and heart. In eyes, strongly expressed in the skin of the eyelid and weakly expressed in the cornea and sclera. In lung, predominantly expressed in the pulmonary mesenchyme. In developing muscle, expressed at myofiber ends (at protein level).

It localises to the secreted. The protein resides in the extracellular space. Its subcellular location is the cytoplasm. The protein localises to the nucleus. It catalyses the reaction L-lysyl-[protein] + O2 + H2O = (S)-2-amino-6-oxohexanoyl-[protein] + H2O2 + NH4(+). It carries out the reaction N(6)-acetyl-L-lysyl-[protein] + O2 + H2O = acetamide + (S)-2-amino-6-oxohexanoyl-[protein] + H2O2. Its function is as follows. Protein-lysine 6-oxidase that mediates the oxidation of peptidyl lysine residues to allysine in target proteins. Catalyzes the post-translational oxidative deamination of peptidyl lysine residues in precursors of elastin and different types of collagens, a prerequisite in the formation of cross-links between collagens and elastin. Required for somite boundary formation by catalyzing oxidation of fibronectin (FN1), enhancing integrin signaling in myofibers and their adhesion to the myotendinous junction (MTJ). Acts as a regulator of inflammatory response by inhibiting differentiation of naive CD4(+) T-cells into T-helper Th17 or regulatory T-cells (Treg): acts by interacting with STAT3 in the nucleus and catalyzing both deacetylation and oxidation of lysine residues on STAT3, leading to disrupt STAT3 dimerization and inhibit STAT3 transcription activity. Oxidation of lysine residues to allysine on STAT3 preferentially takes place on lysine residues that are acetylated. Also able to catalyze deacetylation of lysine residues on STAT3. The polypeptide is Lysyl oxidase homolog 3 (Mus musculus (Mouse)).